The sequence spans 855 residues: Receptor-like protein kinase THESEUS 1 (855 aa).

Positions 1-22 (MVFTKSLLVLLWFLSCYTTTTS) are cleaved as a signal peptide. Topologically, residues 23–415 (SALFNPPDNY…GGSGSKSKKK (393 aa)) are extracellular. N41, N64, N75, N114, N118, N136, N143, N154, N168, N225, N242, N288, N353, and N376 each carry an N-linked (GlcNAc...) asparagine glycan. A helical transmembrane segment spans residues 416–436 (AVIIGSLVGAVTLILLIAVCC). Topologically, residues 437–855 (YCCLVASRKQ…FSQLVHPRGR (419 aa)) are cytoplasmic. A Protein kinase domain is found at 510-783 (FDESSLLGVG…GDVLWNLEYA (274 aa)). ATP is bound by residues 516–524 (LGVGGFGRV) and K538. D634 acts as the Proton acceptor in catalysis. The tract at residues 822 to 855 (IDRGGVNSGTGTDDDAEDATTSAVFSQLVHPRGR) is disordered.

It belongs to the protein kinase superfamily. Ser/Thr protein kinase family. In terms of processing, autophosphorylated. As to expression, expressed in most vegetative tissues, including leaves, stems and roots, primarily in expanding cells and vascular tissue.

The protein resides in the cell membrane. Functionally, receptor-like protein kinase required for cell elongation during vegetative growth, mostly in a brassinosteroid-(BR-) independent manner. Mediates the response of growing plant cells to the perturbation of cellulose synthesis and may act as a cell-wall-integrity sensor. Controls ectopic-lignin accumulation in cellulose-deficient mutant backgrounds. This is Receptor-like protein kinase THESEUS 1 (THE1) from Arabidopsis thaliana (Mouse-ear cress).